The primary structure comprises 121 residues: Securin (121 aa).

Residues 1–24 (RATEKSVKTNGPLKQKQTTFSAKK) are disordered. 2 short sequence motifs (TEK-box) span residues 3-5 (TEK) and 26-28 (TEK). The tract at residues 93–121 (LGPPSPLNMPSPPWESDVLQSPSSILSTL) is disordered. An SH3-binding motif is present at residues 95 to 105 (PPSPLNMPSPP). The span at 95-105 (PPSPLNMPSPP) shows a compositional bias: pro residues. A Phosphoserine; by CDK1 modification is found at Ser-97. A compositionally biased stretch (polar residues) spans 110-121 (VLQSPSSILSTL).

Belongs to the securin family. Interacts with the caspase-like ESPL1, and prevents its protease activity probably by covering its active site. Interacts with p53/TP53 and blocks its activity probably by blocking its binding to DNA. Interacts with the Ku 70 kDa subunit of ds-DNA kinase. Interacts with PTTG1IP. Interacts with RPS10 and DNAJA1. In terms of processing, phosphorylated by CDK1 during mitosis. Phosphorylated in vitro by ds-DNA kinase. Post-translationally, ubiquitinated through 'Lys-11' linkage of ubiquitin moieties by the anaphase promoting complex (APC) at the onset of anaphase, conducting to its degradation. 'Lys-11'-linked ubiquitination is mediated by the E2 ligase UBE2C/UBCH10.

The protein localises to the cytoplasm. It is found in the nucleus. In terms of biological role, regulatory protein, which plays a central role in chromosome stability, in the p53/TP53 pathway, and DNA repair. Probably acts by blocking the action of key proteins. During the mitosis, it blocks Separase/ESPL1 function, preventing the proteolysis of the cohesin complex and the subsequent segregation of the chromosomes. At the onset of anaphase, it is ubiquitinated, conducting to its destruction and to the liberation of ESPL1. Its function is however not limited to a blocking activity, since it is required to activate ESPL1. Negatively regulates the transcriptional activity and related apoptosis activity of p53/TP53. The negative regulation of p53/TP53 may explain the strong transforming capability of the protein when it is overexpressed. May also play a role in DNA repair via its interaction with Ku, possibly by connecting DNA damage-response pathways with sister chromatid separation. This chain is Securin (PTTG1), found in Sus scrofa (Pig).